Consider the following 348-residue polypeptide: NADH-quinone oxidoreductase subunit H (348 aa).

The next 8 helical transmembrane spans lie at I21–A41, G87–I107, I120–G140, I166–V186, I193–F213, N258–V278, L283–F303, and W323–L343.

This sequence belongs to the complex I subunit 1 family. In terms of assembly, NDH-1 is composed of 14 different subunits. Subunits NuoA, H, J, K, L, M, N constitute the membrane sector of the complex.

Its subcellular location is the cell inner membrane. It carries out the reaction a quinone + NADH + 5 H(+)(in) = a quinol + NAD(+) + 4 H(+)(out). In terms of biological role, NDH-1 shuttles electrons from NADH, via FMN and iron-sulfur (Fe-S) centers, to quinones in the respiratory chain. The immediate electron acceptor for the enzyme in this species is believed to be ubiquinone. Couples the redox reaction to proton translocation (for every two electrons transferred, four hydrogen ions are translocated across the cytoplasmic membrane), and thus conserves the redox energy in a proton gradient. This subunit may bind ubiquinone. This Rhizorhabdus wittichii (strain DSM 6014 / CCUG 31198 / JCM 15750 / NBRC 105917 / EY 4224 / RW1) (Sphingomonas wittichii) protein is NADH-quinone oxidoreductase subunit H.